We begin with the raw amino-acid sequence, 385 residues long: Deoxyguanosinetriphosphate triphosphohydrolase-like protein (385 aa).

The span at 1-14 shows a compositional bias: basic and acidic residues; that stretch reads MTEGVEGRSQERSD. Positions 1–23 are disordered; that stretch reads MTEGVEGRSQERSDLAGFAARSA. An HD domain is found at 75-204; it reads RLTHSLEVAQ…INYADEIAYN (130 aa).

It belongs to the dGTPase family. Type 2 subfamily.

The sequence is that of Deoxyguanosinetriphosphate triphosphohydrolase-like protein from Geobacter metallireducens (strain ATCC 53774 / DSM 7210 / GS-15).